We begin with the raw amino-acid sequence, 104 residues long: Large ribosomal subunit protein bL21 (104 aa).

Over residues 78–91 the composition is skewed to basic residues; sequence KRRRQNSRRKRGHR. A disordered region spans residues 78-104; it reads KRRRQNSRRKRGHRQDHTVVRITGISA.

It belongs to the bacterial ribosomal protein bL21 family. Part of the 50S ribosomal subunit. Contacts protein L20.

In terms of biological role, this protein binds to 23S rRNA in the presence of protein L20. This is Large ribosomal subunit protein bL21 from Methylobacterium radiotolerans (strain ATCC 27329 / DSM 1819 / JCM 2831 / NBRC 15690 / NCIMB 10815 / 0-1).